Reading from the N-terminus, the 200-residue chain is LIM domain-containing protein WLIM2a (200 aa).

2 LIM zinc-binding domains span residues 8 to 68 (QKCR…LFKE) and 107 to 167 (DKCA…LFKE).

Interacts with F-actin. In terms of tissue distribution, expressed in roots, leaves, stems, flowers and siliques. Barely detected in pollen.

It is found in the cytoplasm. It localises to the cytoskeleton. In terms of biological role, binds to actin filaments and promotes cross-linking into thick bundles. Has an actin-stabilizing activity. The actin regulatory activities are not regulated by pH and [Ca(2+)]. The sequence is that of LIM domain-containing protein WLIM2a from Arabidopsis thaliana (Mouse-ear cress).